The sequence spans 355 residues: Glucose-6-phosphatase 2 (355 aa).

Topologically, residues 1 to 24 are lumenal; the sequence is MDFLHRSGVLIIHHLQEDYRTYYG. Residues 25-45 traverse the membrane as a helical segment; that stretch reads FLNFMSNVGDPRNIFSIYFPL. At 46 to 56 the chain is on the cytoplasmic side; that stretch reads WFQLNQNVGTK. The chain crosses the membrane as a helical span at residues 57-77; it reads MIWVAVIGDWFNLIFKWILFG. Residues 78–115 are Lumenal-facing; it reads HRPYWWIQETEIYPNHSSPCLEQFPTTCETGPGSPSGH. Arg-79 is a binding site for substrate. Asn-92 carries N-linked (GlcNAc...) asparagine glycosylation. His-115 serves as the catalytic Proton donor. Residues 116–136 traverse the membrane as a helical segment; that stretch reads AMGSSCVWYVMVTAALSYTIS. Residues 137–146 lie on the Cytoplasmic side of the membrane; sequence RMEESSVTLH. Residues 147–167 traverse the membrane as a helical segment; that stretch reads RLTWSFLWSVFWLIQISVCIS. Position 168 (Arg-168) is a topological domain, lumenal. Arg-168 provides a ligand contact to substrate. Residues 169-189 traverse the membrane as a helical segment; that stretch reads VFIATHFPHQVILGVIGGMLV. Residue His-174 is the Nucleophile of the active site. Over 190–211 the chain is Cytoplasmic; sequence AEAFEHTPGVHMASLSVYLKTN. A helical transmembrane segment spans residues 212–232; that stretch reads VFLFLFALGFYLLLRLFGIDL. Over 233–252 the chain is Lumenal; that stretch reads LWSVPIAKKWCANPDWIHID. A helical transmembrane segment spans residues 253-273; sequence STPFAGLVRNLGVLFGLGFAI. Residues 274 to 290 are Cytoplasmic-facing; that stretch reads NSEMFLRSCQGENGTKP. The helical transmembrane segment at 291–307 threads the bilayer; the sequence is SFRLLCALTSLTTMQLY. Over 308–318 the chain is Lumenal; that stretch reads RFIKIPTHAEP. The chain crosses the membrane as a helical span at residues 319–339; the sequence is LFYLLSFCKSASIPLMVVALI. The Cytoplasmic segment spans residues 340–355; sequence PYCVHMLMRPGDKKTK. The Prevents secretion from ER signature appears at 352-355; sequence KKTK.

Belongs to the glucose-6-phosphatase family. In terms of processing, N-glycosylated; the non-glycosylated form is more unstable and is degraded through the proteasome. As to expression, specifically expressed in pancreatic islet cells, in particular those of beta-cell origin. Not detected in testis, kidney, muscle, liver, lung, spleen, brain, pituitary, gastric fundus or heart.

It localises to the endoplasmic reticulum membrane. The enzyme catalyses D-glucose 6-phosphate + H2O = D-glucose + phosphate. Its pathway is carbohydrate biosynthesis; gluconeogenesis. In terms of biological role, may hydrolyze glucose-6-phosphate to glucose in the endoplasmic reticulum. May be responsible for glucose production through glycogenolysis and gluconeogenesis. The chain is Glucose-6-phosphatase 2 (G6pc2) from Mus musculus (Mouse).